The primary structure comprises 95 residues: uncharacterized protein (95 aa).

The tract at residues 46–68 is disordered; sequence GDRGTNGRTEAEHDGIPHSRKKV.

This is an uncharacterized protein from Schizosaccharomyces pombe (strain 972 / ATCC 24843) (Fission yeast).